We begin with the raw amino-acid sequence, 131 residues long: Small ribosomal subunit protein uS8 (131 aa).

Belongs to the universal ribosomal protein uS8 family. Part of the 30S ribosomal subunit. Contacts proteins S5 and S12.

In terms of biological role, one of the primary rRNA binding proteins, it binds directly to 16S rRNA central domain where it helps coordinate assembly of the platform of the 30S subunit. The polypeptide is Small ribosomal subunit protein uS8 (Acidovorax sp. (strain JS42)).